Consider the following 217-residue polypeptide: ATP synthase subunit a (217 aa).

6 consecutive transmembrane segments (helical) span residues 5 to 25, 63 to 83, 89 to 109, 120 to 140, 157 to 177, and 191 to 213; these read EHVI…LAAG, LIAS…LPFV, NINT…FEGF, FMGP…MSHL, GAIL…TLAV, and LAIV…GAVV.

The protein belongs to the ATPase A chain family. F-type ATPases have 2 components, CF(1) - the catalytic core - and CF(0) - the membrane proton channel. CF(1) has five subunits: alpha(3), beta(3), gamma(1), delta(1), epsilon(1). CF(0) has three main subunits: a(1), b(2) and c(9-12). The alpha and beta chains form an alternating ring which encloses part of the gamma chain. CF(1) is attached to CF(0) by a central stalk formed by the gamma and epsilon chains, while a peripheral stalk is formed by the delta and b chains.

The protein resides in the cell inner membrane. Functionally, key component of the proton channel; it plays a direct role in the translocation of protons across the membrane. The protein is ATP synthase subunit a of Hydrogenobaculum sp. (strain Y04AAS1).